Here is a 121-residue protein sequence, read N- to C-terminus: Apoptin (121 aa).

Disordered regions lie at residues M1–P28 and L57–L121. Residues R58–F70 are compositionally biased toward polar residues. Residues R88–E102 show a composition bias toward basic and acidic residues.

The protein belongs to the gyrovirus apoptin family.

The protein localises to the host nucleus. In terms of biological role, may act as transcriptional regulator. Induces apoptosis in infected cells. Element of infectious replication cycle. The protein is Apoptin (VP3) of Gallus gallus (Chicken).